The primary structure comprises 359 residues: Protein RecA (359 aa).

Residue 73–80 (GPESSGKT) participates in ATP binding.

It belongs to the RecA family.

Its subcellular location is the cytoplasm. In terms of biological role, can catalyze the hydrolysis of ATP in the presence of single-stranded DNA, the ATP-dependent uptake of single-stranded DNA by duplex DNA, and the ATP-dependent hybridization of homologous single-stranded DNAs. It interacts with LexA causing its activation and leading to its autocatalytic cleavage. The chain is Protein RecA from Desulfovibrio desulfuricans (strain ATCC 27774 / DSM 6949 / MB).